Reading from the N-terminus, the 693-residue chain is Histone-lysine N-methyltransferase, H3 lysine-9 specific SUVH7 (693 aa).

Disordered stretches follow at residues 64-99 (WYDG…PPEM) and 111-175 (DSSN…AETE). A DNA-binding region (a.T hook) is located at residues 129–141 (KRGRGRPKGSKNS). Residues 227–373 (GAVPGIHVGD…FKEFRFKLVR (147 aa)) form the YDG domain. The region spanning 454–516 (QSLGCQNCRH…HCPTRLVQTG (63 aa)) is the Pre-SET domain. Residues C458, C461, C466, C471, C473, C498, C502, C504, and C508 each coordinate Zn(2+). The SET domain occupies 519–660 (LHLEVFKTRN…PMTELTYDYG (142 aa)). S-adenosyl-L-methionine is bound by residues 529–531 (CGW), D562, Y564, R614, and 617–618 (NH). C620, C681, C683, and C688 together coordinate Zn(2+). Residues 677-693 (GKKTCLCGSVKCRGSFT) form the Post-SET domain.

The protein belongs to the class V-like SAM-binding methyltransferase superfamily. Histone-lysine methyltransferase family. Suvar3-9 subfamily.

It is found in the nucleus. Its subcellular location is the chromosome. The protein localises to the centromere. The enzyme catalyses N(6)-methyl-L-lysyl(9)-[histone H3] + S-adenosyl-L-methionine = N(6),N(6)-dimethyl-L-lysyl(9)-[histone H3] + S-adenosyl-L-homocysteine + H(+). It catalyses the reaction L-lysyl(9)-[histone H3] + S-adenosyl-L-methionine = N(6)-methyl-L-lysyl(9)-[histone H3] + S-adenosyl-L-homocysteine + H(+). In terms of biological role, histone methyltransferase. Methylates 'Lys-9' of histone H3. H3 'Lys-9' methylation represents a specific tag for epigenetic transcriptional repression. This chain is Histone-lysine N-methyltransferase, H3 lysine-9 specific SUVH7 (SUVH7), found in Arabidopsis thaliana (Mouse-ear cress).